Reading from the N-terminus, the 423-residue chain is Glutamate-1-semialdehyde 2,1-aminomutase (423 aa).

K266 is modified (N6-(pyridoxal phosphate)lysine).

It belongs to the class-III pyridoxal-phosphate-dependent aminotransferase family. HemL subfamily. Homodimer. Pyridoxal 5'-phosphate is required as a cofactor.

Its subcellular location is the cytoplasm. The catalysed reaction is (S)-4-amino-5-oxopentanoate = 5-aminolevulinate. It participates in porphyrin-containing compound metabolism; protoporphyrin-IX biosynthesis; 5-aminolevulinate from L-glutamyl-tRNA(Glu): step 2/2. The protein is Glutamate-1-semialdehyde 2,1-aminomutase of Nitratidesulfovibrio vulgaris (strain ATCC 29579 / DSM 644 / CCUG 34227 / NCIMB 8303 / VKM B-1760 / Hildenborough) (Desulfovibrio vulgaris).